Consider the following 471-residue polypeptide: Major facilitator-type transporter psiT1 (471 aa).

Positions 1-36 are disordered; it reads MNPTTATDAHERTSLLSGRPQSAANSTAPYERQVQP. Over residues 14-36 the composition is skewed to polar residues; it reads SLLSGRPQSAANSTAPYERQVQP. A glycan (N-linked (GlcNAc...) asparagine) is linked at asparagine 25. A run of 8 helical transmembrane segments spans residues 44–64, 108–128, 140–160, 168–188, 212–232, 237–257, 322–342, and 356–376; these read TPVT…TMVI, AIMV…GTGI, PVLM…LTVQ, LVTF…TTVF, GWLV…TTFL, AVYI…AFVL, LHSF…LIFF, and VMTT…PLFI. Asparagine 384 is a glycosylation site (N-linked (GlcNAc...) asparagine). A helical membrane pass occupies residues 424-444; sequence VHITVISWTIESLAYIVLGTV.

This sequence belongs to the major facilitator superfamily. TCR/Tet family.

The protein localises to the membrane. Its function is as follows. Major facilitator-type transporter; part of the gene cluster that mediates the biosynthesis of psilocybin, a psychotropic tryptamine-derived natural product. This chain is Major facilitator-type transporter psiT1, found in Psilocybe cyanescens.